Here is a 340-residue protein sequence, read N- to C-terminus: Guanine nucleotide-binding protein G(I)/G(S)/G(T) subunit beta-2 (340 aa).

S2 is subject to N-acetylserine. 7 WD repeats span residues 53–83, 95–125, 141–170, 182–212, 224–254, 268–298, and 310–340; these read GHLA…IIWD, LRSS…SIYS, GHTG…ALWD, GHSG…KLWD, GHES…RLFD, NIIC…NIWD, and GHDN…KIWN. At Y239 the chain carries Phosphotyrosine.

The protein belongs to the WD repeat G protein beta family. G proteins are composed of 3 units, alpha, beta and gamma. In this context, interacts with GNAI2 and GNG2. Interacts with ARHGEF18 and RASD2. Interacts with ATXN10. Interacts with SCN8A. As to expression, expressed in all cardiac subcompartments and in the brain, with highest levels in the atrioventricular node and brain.

The protein localises to the cytoplasm. The protein resides in the perinuclear region. It localises to the cell membrane. Its function is as follows. Guanine nucleotide-binding proteins (G proteins) are involved as a modulator or transducer in various transmembrane signaling systems. The beta and gamma chains are required for the GTPase activity, for replacement of GDP by GTP, and for G protein-effector interaction. This chain is Guanine nucleotide-binding protein G(I)/G(S)/G(T) subunit beta-2 (GNB2), found in Homo sapiens (Human).